Reading from the N-terminus, the 86-residue chain is Neurotoxin LmNaTx34.1 (86 aa).

A signal peptide spans 1–18 (MKTVILVVIALMVIEVQG). Residues 19-85 (DGYLMVRAGI…IWTYEKNTCS (67 aa)) enclose the LCN-type CS-alpha/beta domain. Cystine bridges form between cysteine 32-cysteine 84, cysteine 36-cysteine 57, cysteine 43-cysteine 64, and cysteine 47-cysteine 66.

This sequence belongs to the long (4 C-C) scorpion toxin superfamily. Sodium channel inhibitor family. Beta subfamily. In terms of tissue distribution, expressed by the venom gland.

Its subcellular location is the secreted. In terms of biological role, binds voltage-independently at site-4 of sodium channels (Nav) and shift the voltage of activation toward more negative potentials thereby affecting sodium channel activation and promoting spontaneous and repetitive firing. This Lychas mucronatus (Chinese swimming scorpion) protein is Neurotoxin LmNaTx34.1.